A 545-amino-acid polypeptide reads, in one-letter code: CTP synthase (545 aa).

Positions methionine 1–leucine 266 are amidoligase domain. Serine 14 serves as a coordination point for CTP. Serine 14 is a UTP binding site. ATP-binding positions include serine 15–isoleucine 20 and aspartate 72. 2 residues coordinate Mg(2+): aspartate 72 and glutamate 140. Residues aspartate 147 to glutamate 149, lysine 187 to glutamine 192, and lysine 223 contribute to the CTP site. UTP-binding positions include lysine 187–glutamine 192 and lysine 223. Residue arginine 239 to valine 241 participates in ATP binding. In terms of domain architecture, Glutamine amidotransferase type-1 spans threonine 291–glutamate 542. Glycine 352 is a binding site for L-glutamine. Cysteine 379 acts as the Nucleophile; for glutamine hydrolysis in catalysis. L-glutamine is bound by residues leucine 380–glutamine 383, glutamate 403, and arginine 470. Residues histidine 515 and glutamate 517 contribute to the active site.

It belongs to the CTP synthase family. As to quaternary structure, homotetramer.

It carries out the reaction UTP + L-glutamine + ATP + H2O = CTP + L-glutamate + ADP + phosphate + 2 H(+). The enzyme catalyses L-glutamine + H2O = L-glutamate + NH4(+). The catalysed reaction is UTP + NH4(+) + ATP = CTP + ADP + phosphate + 2 H(+). It functions in the pathway pyrimidine metabolism; CTP biosynthesis via de novo pathway; CTP from UDP: step 2/2. With respect to regulation, allosterically activated by GTP, when glutamine is the substrate; GTP has no effect on the reaction when ammonia is the substrate. The allosteric effector GTP functions by stabilizing the protein conformation that binds the tetrahedral intermediate(s) formed during glutamine hydrolysis. Inhibited by the product CTP, via allosteric rather than competitive inhibition. In terms of biological role, catalyzes the ATP-dependent amination of UTP to CTP with either L-glutamine or ammonia as the source of nitrogen. Regulates intracellular CTP levels through interactions with the four ribonucleotide triphosphates. In Idiomarina loihiensis (strain ATCC BAA-735 / DSM 15497 / L2-TR), this protein is CTP synthase.